A 237-amino-acid polypeptide reads, in one-letter code: NAD-dependent protein deacylase (237 aa).

Positions 1-235 constitute a Deacetylase sirtuin-type domain; that stretch reads MRVVVLSGAG…PGLLQRLPAL (235 aa). 8-28 lines the NAD(+) pocket; that stretch reads GAGISAESDVPTFRDDKNGLW. Substrate contacts are provided by Y53 and R56. 86 to 89 is an NAD(+) binding site; sequence QNVD. H104 serves as the catalytic Proton acceptor. Zn(2+) is bound by residues C112, C115, C138, and C140. Residues 177–179, 203–205, and A221 each bind NAD(+); these read GTS and NPE.

Belongs to the sirtuin family. Class III subfamily. Zn(2+) is required as a cofactor.

It localises to the cytoplasm. It carries out the reaction N(6)-acetyl-L-lysyl-[protein] + NAD(+) + H2O = 2''-O-acetyl-ADP-D-ribose + nicotinamide + L-lysyl-[protein]. The catalysed reaction is N(6)-succinyl-L-lysyl-[protein] + NAD(+) + H2O = 2''-O-succinyl-ADP-D-ribose + nicotinamide + L-lysyl-[protein]. NAD-dependent lysine deacetylase and desuccinylase that specifically removes acetyl and succinyl groups on target proteins. Modulates the activities of several proteins which are inactive in their acylated form. The protein is NAD-dependent protein deacylase of Mycobacterium leprae (strain TN).